The following is a 105-amino-acid chain: Late embryogenesis abundant protein Lea5-A (105 aa).

This sequence belongs to the LEA type 3 family.

This chain is Late embryogenesis abundant protein Lea5-A (LEA5-A), found in Gossypium hirsutum (Upland cotton).